Reading from the N-terminus, the 282-residue chain is Pantothenate synthetase (282 aa).

30 to 37 (MGNLHQGH) is an ATP binding site. His37 serves as the catalytic Proton donor. Gln61 contributes to the (R)-pantoate binding site. Gln61 is a beta-alanine binding site. 149 to 152 (GKKD) contacts ATP. (R)-pantoate is bound at residue Gln155. ATP-binding positions include Ile178 and 186–189 (MSSR).

Belongs to the pantothenate synthetase family. In terms of assembly, homodimer.

The protein localises to the cytoplasm. The enzyme catalyses (R)-pantoate + beta-alanine + ATP = (R)-pantothenate + AMP + diphosphate + H(+). It participates in cofactor biosynthesis; (R)-pantothenate biosynthesis; (R)-pantothenate from (R)-pantoate and beta-alanine: step 1/1. Its function is as follows. Catalyzes the condensation of pantoate with beta-alanine in an ATP-dependent reaction via a pantoyl-adenylate intermediate. In Shewanella loihica (strain ATCC BAA-1088 / PV-4), this protein is Pantothenate synthetase.